We begin with the raw amino-acid sequence, 422 residues long: MKISLLGHGKTTLALARFFKKNHNEVKFFDDQFTSFHKDREGFLCHPSKDFNPNDSQLEVVSPGISFTHPLVIKAKHLVSEYDYIDSLFDLVFTPTIISISGTNGKTTTTEMLTMLLEDFKAVSGGNIGTPLIELFEKQSPLWVLETSSFSLHYTNKAYPLIYLLINVEADHLTWHCNFENYLNAKLKVLTLMPKTSLAIIPLKFKEHPIIQNSQAQKIFFDKSEEILECLKIPSNALFFKGAFLLDAALALLVYEQFLKIKNLKWQDYRENALKRLNAFKIGSHKMEEFRDKQGRLWVDDSKATNIDATLQALKTFKNQKIHLIVGGDIKGVNLTPLFEEFKNHEVSLYAIGSSASIIQALALEFNVSCQVCLKLEKAVQEIKSVLSQNEIALLSPSAASLDQFSSYKERGEKFKAFVLKD.

102 to 108 provides a ligand contact to ATP; that stretch reads GTNGKTT.

The protein belongs to the MurCDEF family.

The protein resides in the cytoplasm. The catalysed reaction is UDP-N-acetyl-alpha-D-muramoyl-L-alanine + D-glutamate + ATP = UDP-N-acetyl-alpha-D-muramoyl-L-alanyl-D-glutamate + ADP + phosphate + H(+). It participates in cell wall biogenesis; peptidoglycan biosynthesis. In terms of biological role, cell wall formation. Catalyzes the addition of glutamate to the nucleotide precursor UDP-N-acetylmuramoyl-L-alanine (UMA). The chain is UDP-N-acetylmuramoylalanine--D-glutamate ligase from Helicobacter pylori (strain HPAG1).